We begin with the raw amino-acid sequence, 689 residues long: Glycine--tRNA ligase beta subunit (689 aa).

The protein belongs to the class-II aminoacyl-tRNA synthetase family. As to quaternary structure, tetramer of two alpha and two beta subunits.

It is found in the cytoplasm. The enzyme catalyses tRNA(Gly) + glycine + ATP = glycyl-tRNA(Gly) + AMP + diphosphate. The chain is Glycine--tRNA ligase beta subunit from Escherichia coli O8 (strain IAI1).